Reading from the N-terminus, the 715-residue chain is Putative macrophage stimulating 1-like protein (715 aa).

The signal sequence occupies residues 1-20 (MAPAPVTLLAPGAASSMSCS). Residues 21 to 110 (QPGQRSPSND…GRCDLFQEKG (90 aa)) form the PAN domain. 4 consecutive Kringle domains span residues 63–156 (GRCG…IKSC), 160–238 (ACVW…LPRC), 252–345 (SCFR…IRRC), and 353–464 (DCYH…LRRC). Cystine bridges form between cysteine 127–cysteine 151, cysteine 161–cysteine 238, cysteine 182–cysteine 221, cysteine 210–cysteine 233, cysteine 253–cysteine 345, cysteine 316–cysteine 339, cysteine 354–cysteine 464, cysteine 375–cysteine 447, cysteine 511–cysteine 527, cysteine 606–cysteine 671, cysteine 636–cysteine 650, and cysteine 661–cysteine 689. Positions 488-713 (VAGGHPGNSP…FVDWIHKVMR (226 aa)) constitute a Peptidase S1 domain.

This sequence belongs to the peptidase S1 family. Plasminogen subfamily.

Its subcellular location is the secreted. The chain is Putative macrophage stimulating 1-like protein (MST1L) from Homo sapiens (Human).